A 505-amino-acid polypeptide reads, in one-letter code: Histidine ammonia-lyase (505 aa).

Positions Ala-144–Gly-146 form a cross-link, 5-imidazolinone (Ala-Gly). Residue Ser-145 is modified to 2,3-didehydroalanine (Ser).

Belongs to the PAL/histidase family. Post-translationally, contains an active site 4-methylidene-imidazol-5-one (MIO), which is formed autocatalytically by cyclization and dehydration of residues Ala-Ser-Gly.

It localises to the cytoplasm. The enzyme catalyses L-histidine = trans-urocanate + NH4(+). Its pathway is amino-acid degradation; L-histidine degradation into L-glutamate; N-formimidoyl-L-glutamate from L-histidine: step 1/3. The polypeptide is Histidine ammonia-lyase (Legionella pneumophila (strain Corby)).